We begin with the raw amino-acid sequence, 225 residues long: Thylakoid lumenal 17.9 kDa protein, chloroplastic (225 aa).

Its subcellular location is the plastid. The protein resides in the chloroplast thylakoid lumen. This is Thylakoid lumenal 17.9 kDa protein, chloroplastic from Arabidopsis thaliana (Mouse-ear cress).